The chain runs to 292 residues: uncharacterized protein (292 aa).

This is an uncharacterized protein from Haemophilus influenzae (strain ATCC 51907 / DSM 11121 / KW20 / Rd).